Here is an 88-residue protein sequence, read N- to C-terminus: Large ribosomal subunit protein eL34 (88 aa).

Positions 41 to 72 (RPLNGIPRGRPNELRKLPKTKKRPERPMPNLC) are disordered.

The protein belongs to the eukaryotic ribosomal protein eL34 family.

This is Large ribosomal subunit protein eL34 from Thermococcus sibiricus (strain DSM 12597 / MM 739).